Consider the following 764-residue polypeptide: 1,4-alpha-glucan branching enzyme GlgB (764 aa).

Residue aspartate 434 is the Nucleophile of the active site. The active-site Proton donor is the glutamate 487.

Belongs to the glycosyl hydrolase 13 family. GlgB subfamily. Monomer.

It catalyses the reaction Transfers a segment of a (1-&gt;4)-alpha-D-glucan chain to a primary hydroxy group in a similar glucan chain.. It participates in glycan biosynthesis; glycogen biosynthesis. Catalyzes the formation of the alpha-1,6-glucosidic linkages in glycogen by scission of a 1,4-alpha-linked oligosaccharide from growing alpha-1,4-glucan chains and the subsequent attachment of the oligosaccharide to the alpha-1,6 position. The protein is 1,4-alpha-glucan branching enzyme GlgB of Trichormus variabilis (strain ATCC 29413 / PCC 7937) (Anabaena variabilis).